The following is a 97-amino-acid chain: Protein 9b (97 aa).

The 90-residue stretch at 8-97 folds into the 9b domain; that stretch reads VPPALHLVDP…PDEFVVVTAK (90 aa).

In terms of assembly, homodimer.

The protein resides in the host cytoplasmic vesicle membrane. It is found in the host cytoplasm. This is Protein 9b from Bat coronavirus 279/2005 (BtCoV).